We begin with the raw amino-acid sequence, 317 residues long: Inactive serine protease 45 (317 aa).

The N-terminal stretch at 1–35 (MATSLRGLDAGPGSLRRWILICFAALLLLPPRPNL) is a signal peptide. Asparagine 40 carries an N-linked (GlcNAc...) asparagine glycan. Residues 44 to 291 (PVCGTPWWPD…YTIWIKDQVS (248 aa)) form the Peptidase S1 domain. A disulfide bridge connects residues cysteine 75 and cysteine 91. Asparagine 110 is a glycosylation site (N-linked (GlcNAc...) asparagine). Cystine bridges form between cysteine 172–cysteine 249, cysteine 207–cysteine 230, and cysteine 239–cysteine 267. N-linked (GlcNAc...) asparagine glycosylation occurs at asparagine 272.

It belongs to the peptidase S1 family.

The protein localises to the secreted. The chain is Inactive serine protease 45 from Mus musculus (Mouse).